Reading from the N-terminus, the 498-residue chain is MISMKYRDLRDFLSLLEQRGELKRISQPIDPYLEMTEIADRTLRAGGPALLFENPKGYSMPVLCNLFGTAKRVAMGMGQEDVSALRDVGKLLAFLKEPDPPKGFRDLFDKLPKFKQVLNMPTKRLNSAPCQEQVWQGEDVDLSRIPVMHCWPEDAAPLVSWGLTITRGPHKERQNLGIYRQQVLGKNKLIMRWLSHRGGALDYQEWCEAHPGERFPVAVALGADPATILAAVTPVPDTLSEYAFAGLLRGHKTEVVKCLSNDLEVPASAEIVLEGYIEQGDMAPEGPYGDHTGYYNEIDNFPVFTVTHITQRQDAIYHSTYTGRPPDEPAVMGVALNEVFVPILQKQFPEIVDFYLPPEGCSYRLAVVTIKKQYAGHAKRVMMGVWSFLRQFMYTKFVIVCDDDINARDWNDVIWAITTRMDPSRDTVLIENTPIDYLDFASPVSGLGSKMGLDATNKWPAETPREWGRPIKMDEDVRARIDALWDELAIFSDKDAKR.

Asparagine 175 contacts Mn(2+). Prenylated FMN is bound by residues isoleucine 178–arginine 180, arginine 192–leucine 194, and arginine 197–glycine 198. Glutamate 241 contributes to the Mn(2+) binding site. Aspartate 290 acts as the Proton donor in catalysis.

This sequence belongs to the UbiD family. As to quaternary structure, homohexamer. It depends on prenylated FMN as a cofactor. The cofactor is Mn(2+).

Its subcellular location is the cell membrane. The catalysed reaction is a 4-hydroxy-3-(all-trans-polyprenyl)benzoate + H(+) = a 2-(all-trans-polyprenyl)phenol + CO2. Its pathway is cofactor biosynthesis; ubiquinone biosynthesis. Catalyzes the decarboxylation of 3-octaprenyl-4-hydroxy benzoate to 2-octaprenylphenol, an intermediate step in ubiquinone biosynthesis. This is 3-octaprenyl-4-hydroxybenzoate carboxy-lyase from Yersinia pseudotuberculosis serotype I (strain IP32953).